Here is a 1057-residue protein sequence, read N- to C-terminus: Hemophilin receptor (1057 aa).

Residues 168 to 285 enclose the TBDR plug domain; the sequence is KVYDANRSSV…VGGAVVVKTL (118 aa). The region spanning 296–1057 is the TBDR beta-barrel domain; sequence SFGAELKVEG…TMKISWTTKF (762 aa).

This sequence belongs to the TonB-dependent receptor family.

It localises to the cell outer membrane. Its function is as follows. Part of a high affinity heme acquisition system. Functions as a gateway for heme entry into the bacterial cell, enabling growth on hemoprotein sources. Can acquire heme directly from hemoprotein reservoirs, however, HphA likely enhances the efficiency of this process by delivering heme to HphR. Is essential for virulence, bacterial dissemination and growth in the blood. The protein is Hemophilin receptor of Acinetobacter baumannii.